A 927-amino-acid polypeptide reads, in one-letter code: Alpha-catenin-like protein hmp-1 (927 aa).

Coiled-coil stretches lie at residues 319 to 354 (TREN…RRDD) and 672 to 696 (QENQ…QIDI). Residues 901–927 (RNEIETGRDSDDEELDRRHQQRINGRL) form a disordered region.

Belongs to the vinculin/alpha-catenin family. As to quaternary structure, component of a core catenin-cadherin complex consisting of hmr-1, hmp-1 and hmp-2; the complex localizes to adherens junctions. May interact with hmp-2. In terms of tissue distribution, epidermal cells.

The protein localises to the cell junction. The protein resides in the adherens junction. Its subcellular location is the cytoplasm. In terms of biological role, required for cell migration during body enclosure and cell shape changes during body elongation. Required for proper localization of other junctional components, such as pac-1. The sequence is that of Alpha-catenin-like protein hmp-1 (hmp-1) from Caenorhabditis elegans.